The chain runs to 190 residues: Protein PLANT CADMIUM RESISTANCE 10 (190 aa).

2 consecutive transmembrane segments (helical) span residues 78–98 and 108–125; these read LLGS…WALV and GALL…ACGY.

This sequence belongs to the cornifelin family.

The protein resides in the membrane. In terms of biological role, may be involved in cadmium resistance. This chain is Protein PLANT CADMIUM RESISTANCE 10 (PCR10), found in Arabidopsis thaliana (Mouse-ear cress).